The chain runs to 1272 residues: uncharacterized protein (1272 aa).

This is an uncharacterized protein from Methanocaldococcus jannaschii (strain ATCC 43067 / DSM 2661 / JAL-1 / JCM 10045 / NBRC 100440) (Methanococcus jannaschii).